A 388-amino-acid polypeptide reads, in one-letter code: MKWLLLLGLVALSECIMYKVPLIRKKSLRRTLSERGLLKDFLKKHNLNPARKYFPQWEAPTLVDEQPLENYLDMEYFGTIGIGTPAQDFTVVFDTGSSNLWVPSVYCSSLACTNHNRFNPEDSSTYQSTSETVSITYGTGSMTGILGYDTVQVGGISDTNQIFGLSETEPGSFLYYAPFDGILGLAYPSISSSGATPVFDNIWNQGLVSQDLFSVYLSADDQSGSVVIFGGIDSSYYTGSLNWVPVTVEGYWQITVDSITMNGEAIACAEGCQAIVDTGTSLLTGPTSPIANIQSDIGASENSDGDMVVSCSAISSLPDIVFTINGVQYPVPPSAYILQSEGSCISGFQGMNLPTESGELWILGDVFIRQYFTVFDRANNQVGLAPVA.

An N-terminal signal peptide occupies residues 1-15 (MKWLLLLGLVALSEC). Residues 16 to 62 (IMYKVPLIRKKSLRRTLSERGLLKDFLKKHNLNPARKYFPQWEAPTL) constitute a propeptide, activation peptide. Residues 76 to 385 (YFGTIGIGTP…DRANNQVGLA (310 aa)) enclose the Peptidase A1 domain. D94 is an active-site residue. Cysteines 107 and 112 form a disulfide. S130 carries the post-translational modification Phosphoserine. The cysteines at positions 268 and 272 are disulfide-linked. D277 is an active-site residue. An intrachain disulfide couples C311 to C344.

This sequence belongs to the peptidase A1 family.

Its subcellular location is the secreted. It carries out the reaction Preferential cleavage: hydrophobic, preferably aromatic, residues in P1 and P1' positions. Cleaves 1-Phe-|-Val-2, 4-Gln-|-His-5, 13-Glu-|-Ala-14, 14-Ala-|-Leu-15, 15-Leu-|-Tyr-16, 16-Tyr-|-Leu-17, 23-Gly-|-Phe-24, 24-Phe-|-Phe-25 and 25-Phe-|-Tyr-26 bonds in the B chain of insulin.. Shows particularly broad specificity; although bonds involving phenylalanine and leucine are preferred, many others are also cleaved to some extent. This is Pepsin A-4 (PGA4) from Homo sapiens (Human).